We begin with the raw amino-acid sequence, 674 residues long: DNA mismatch repair protein MutL (674 aa).

The protein belongs to the DNA mismatch repair MutL/HexB family.

Functionally, this protein is involved in the repair of mismatches in DNA. It is required for dam-dependent methyl-directed DNA mismatch repair. May act as a 'molecular matchmaker', a protein that promotes the formation of a stable complex between two or more DNA-binding proteins in an ATP-dependent manner without itself being part of a final effector complex. The protein is DNA mismatch repair protein MutL of Clostridium perfringens (strain ATCC 13124 / DSM 756 / JCM 1290 / NCIMB 6125 / NCTC 8237 / Type A).